The primary structure comprises 552 residues: BAR/IMD domain-containing adapter protein 2 (552 aa).

Residues 1 to 250 (MSLSRSEEMH…VQLMQQVASN (250 aa)) form the IMD domain. Residues 132 to 153 (DALDKCQAELKKLRKKSQGSKN) are a coiled coil. Phosphoserine is present on Ser-261. A disordered region spans residues 295–369 (STPIMNGVTG…TLPRSSSMAA (75 aa)). Thr-296 carries the post-translational modification Phosphothreonine. Residues 320 to 334 (QPKSLSPPQSQSKLS) are compositionally biased toward low complexity. Ser-323, Ser-325, and Ser-336 each carry phosphoserine. The residue at position 340 (Thr-340) is a Phosphothreonine. A Phosphoserine modification is found at Ser-346. Polar residues predominate over residues 348–367 (TPKNSYATTENKTLPRSSSM). Thr-360 carries the phosphothreonine modification. Ser-366, Ser-384, Ser-395, and Ser-454 each carry phosphoserine. The SH3 domain maps to 374-437 (NGRMRVKAIF…PFSYTRVLDS (64 aa)). The segment covering 447–457 (LQQGKSSSTGN) has biased composition (polar residues). Disordered regions lie at residues 447 to 466 (LQQG…DLAI) and 525 to 552 (TNDR…LAGR).

In terms of assembly, homodimer. Interacts with CDC42 and RAC1 that have been activated by GTP binding. Interacts with ATN1, ADGRB1, EPS8, SHANK1, SHANK2, SHANK3, WASF1 and WASF2. Interacts with ENAH after recruitment of CDC42. Interacts with TIAM1 and DIAPH1. Interacts (via SH3 domain) with E.coli effector protein EspF(U) (via PXXP motifs). Interacts with E.coli intimin receptor Tir. In terms of processing, phosphorylated on tyrosine residues by INSR in response to insulin treatment. Isoform 1 and isoform 4 are expressed almost exclusively in brain. Isoform 4 is barely detectable in placenta, prostate and testis. A short isoform is ubiquitous, with the highest expression in liver, prostate, testis and placenta.

It localises to the cytoplasm. Its subcellular location is the membrane. The protein localises to the cell projection. The protein resides in the filopodium. It is found in the ruffle. It localises to the cytoskeleton. Adapter protein that links membrane-bound small G-proteins to cytoplasmic effector proteins. Necessary for CDC42-mediated reorganization of the actin cytoskeleton and for RAC1-mediated membrane ruffling. Involved in the regulation of the actin cytoskeleton by WASF family members and the Arp2/3 complex. Plays a role in neurite growth. Acts syngeristically with ENAH to promote filipodia formation. Plays a role in the reorganization of the actin cytoskeleton in response to bacterial infection. Participates in actin bundling when associated with EPS8, promoting filopodial protrusions. The sequence is that of BAR/IMD domain-containing adapter protein 2 (BAIAP2) from Homo sapiens (Human).